Reading from the N-terminus, the 728-residue chain is Catalase B (728 aa).

Catalysis depends on residues His107 and Asn180. Tyr394 provides a ligand contact to heme.

It belongs to the catalase family. The cofactor is heme.

It localises to the secreted. It catalyses the reaction 2 H2O2 = O2 + 2 H2O. Functionally, occurs in almost all aerobically respiring organisms and serves to protect cells from the toxic effects of hydrogen peroxide. The protein is Catalase B (CATB) of Ajellomyces capsulatus (Darling's disease fungus).